The following is a 277-amino-acid chain: 2-dehydro-3-deoxyphosphooctonate aldolase (277 aa).

Belongs to the KdsA family.

It is found in the cytoplasm. The catalysed reaction is D-arabinose 5-phosphate + phosphoenolpyruvate + H2O = 3-deoxy-alpha-D-manno-2-octulosonate-8-phosphate + phosphate. It participates in carbohydrate biosynthesis; 3-deoxy-D-manno-octulosonate biosynthesis; 3-deoxy-D-manno-octulosonate from D-ribulose 5-phosphate: step 2/3. The protein operates within bacterial outer membrane biogenesis; lipopolysaccharide biosynthesis. This Vesicomyosocius okutanii subsp. Calyptogena okutanii (strain HA) protein is 2-dehydro-3-deoxyphosphooctonate aldolase.